The primary structure comprises 310 residues: HTH-type transcriptional activator TtdR (310 aa).

Residues 6-63 (PLAKDLQVLVEIVHSGSFSAAAATLGQTPAFVTKRIQILENTLATTLLNRSARGVALT) form the HTH lysR-type domain. Residues 23 to 42 (FSAAAATLGQTPAFVTKRIQ) constitute a DNA-binding region (H-T-H motif).

This sequence belongs to the LysR transcriptional regulatory family.

Functionally, positive regulator required for L-tartrate-dependent anaerobic growth on glycerol. Induces expression of the ttdA-ttdB-ygjE operon. In Escherichia coli (strain K12), this protein is HTH-type transcriptional activator TtdR (ttdR).